Here is a 228-residue protein sequence, read N- to C-terminus: Uracil-DNA glycosylase (228 aa).

The active-site Proton acceptor is Asp64.

The protein belongs to the uracil-DNA glycosylase (UDG) superfamily. UNG family.

Its subcellular location is the cytoplasm. It catalyses the reaction Hydrolyzes single-stranded DNA or mismatched double-stranded DNA and polynucleotides, releasing free uracil.. Excises uracil residues from the DNA which can arise as a result of misincorporation of dUMP residues by DNA polymerase or due to deamination of cytosine. The protein is Uracil-DNA glycosylase of Pectobacterium atrosepticum (strain SCRI 1043 / ATCC BAA-672) (Erwinia carotovora subsp. atroseptica).